The primary structure comprises 259 residues: Putative hydro-lyase Bphyt_4813 (259 aa).

The protein belongs to the D-glutamate cyclase family.

The polypeptide is Putative hydro-lyase Bphyt_4813 (Paraburkholderia phytofirmans (strain DSM 17436 / LMG 22146 / PsJN) (Burkholderia phytofirmans)).